We begin with the raw amino-acid sequence, 404 residues long: SL1278 acyltransferase Chp1 (404 aa).

Residues 1–42 (MKCPGVSDCVATVRHDNVFAIAAGLRWSAAVPPLHKGDAVTK) are Periplasmic-facing. The helical transmembrane segment at 43-63 (LLVGAIAGGMLACAAILGDGI) threads the bilayer. The Cytoplasmic portion of the chain corresponds to 64-404 (ASADTALIVP…RGLLPKGKKH (341 aa)). One can recognise a PE-PPE domain in the interval 104–325 (PTATRHVVSY…LRPIIDRAYQ (222 aa)).

It belongs to the mycobacterial PPE family.

It localises to the cell inner membrane. The catalysed reaction is 3 3'-(hydroxy)phthioceranyl-2'-palmitoyl(stearoyl)-2-O-sulfo-alpha,alpha-trehalose = 3,6,6'-tris-(hydroxy)phthioceranyl-2-palmitoyl(stearoyl)-2'-sulfo-alpha-alpha-trehalose + 2 2'-palmitoyl/stearoyl-2-O-sulfo-alpha,alpha-trehalose.. With respect to regulation, activity is potentiated by the SL-1 transporter MmpL8. Inhibited by the lipase inhibitor tetrahydrolipstatin (THL). In terms of biological role, involved in the final steps of the cell wall sulfolipid-1 (SL-1) biosynthesis. Catalyzes two successive acylations of the precursor 2-palmitoyl-3-(C43)-phthioceranyl-alpha, alpha'-D-trehalose-2'-sulfate (SL1278) to yield the tetraacylated sulfolipid SL-1. This Mycobacterium tuberculosis (strain ATCC 25618 / H37Rv) protein is SL1278 acyltransferase Chp1.